A 134-amino-acid chain; its full sequence is Replication enhancer protein (134 aa).

The protein belongs to the geminiviridae replication enhancer protein family. As to quaternary structure, homooligomer. Interacts with the replication-associated protein (REP). Interacts with host proliferating cell nuclear antigen (PCNA). Interacts with host retinoblastoma-related protein 1 (RBR1), and may thereby deregulate the host cell cycle. Oligomerization and interaction with PCNA are necessary for optimal replication enhancement.

Functionally, increases viral DNA accumulation. Enhances infectivity and symptom expression. The polypeptide is Replication enhancer protein (Solanum lycopersicum (Tomato)).